We begin with the raw amino-acid sequence, 146 residues long: 3-hydroxyacyl-[acyl-carrier-protein] dehydratase FabZ (146 aa).

His48 is a catalytic residue.

This sequence belongs to the thioester dehydratase family. FabZ subfamily.

The protein localises to the cytoplasm. The enzyme catalyses a (3R)-hydroxyacyl-[ACP] = a (2E)-enoyl-[ACP] + H2O. Its function is as follows. Involved in unsaturated fatty acids biosynthesis. Catalyzes the dehydration of short chain beta-hydroxyacyl-ACPs and long chain saturated and unsaturated beta-hydroxyacyl-ACPs. The sequence is that of 3-hydroxyacyl-[acyl-carrier-protein] dehydratase FabZ from Teredinibacter turnerae (strain ATCC 39867 / T7901).